The primary structure comprises 837 residues: SLIT and NTRK-like protein 4 (837 aa).

The signal sequence occupies residues 1 to 18; the sequence is MFLWLFLIVSALISSTNA. The Extracellular segment spans residues 19–618; the sequence is DSDISVEICN…SPPGGPVPLS (600 aa). LRR repeat units follow at residues 60-81, 84-105, 108-129, 132-153, 156-177, and 179-200; these read NFYHLNFQNNFLNILYPNTFVN, HAVSLHLGNNKLQNIEGGAFLG, ALKQLHLNNNELKILRADTFLG, NLEYLQADYNLIKYIERGAFNK, KLKVLILNDNLISFLPDNIFRF, and SLTHLDIRGNRIQKLPYIGVLE. Asn-81 carries N-linked (GlcNAc...) asparagine glycosylation. One can recognise an LRRCT 1 domain in the interval 213 to 264; the sequence is NPWNCSCDLLPLKAWLENMPYNIYIGEAICETPSDLYGRLLKETNKQELCPM. Asn-325 carries an N-linked (GlcNAc...) asparagine glycan. In terms of domain architecture, LRRNT spans 333–375; that stretch reads QTRVPPLTPCPVPCFCKTHPSDLGLSVNCQEKNIQSMSELTPK. LRR repeat units lie at residues 378–399, 402–423, 426–447, 450–471, 474–495, and 497–518; these read NAKKLHVNGNNIKDVDISDFTE, GLDLLHLGSNQITLIKGEVFHN, NLRRLYLNGNQIERLYPEIFSG, NLQYLYLEYNLIKEILAGTFDS, NLQLLYLNNNLLKSLPVYIFSG, and PLARLNLRNNKFMYLPVSGVLD. Residue Asn-423 is glycosylated (N-linked (GlcNAc...) asparagine). The LRRCT 2 domain maps to 531-582; that stretch reads NPWDCTCDLVALKLWLEKLNDGIVVKELKCETPVQFANIELKSLKNEILCPK. The chain crosses the membrane as a helical span at residues 619–639; that stretch reads ILILSILVVLILTVFVAFCLL. Topologically, residues 640–837 are cytoplasmic; sequence VFVLRRNKKP…LEEQTALNKI (198 aa).

The protein belongs to the SLITRK family. Interacts (via LRR 1 and 2 repeats) with PTPRD (via extracellular domain). In the adult, significant expression is detected only in the brain. Broadly expressed in embryonic brain with highest expression in subventricular zone, subplate, cortical plate, pyramidal cell layer of hippocampus, thalamus and hypothalamus.

The protein resides in the membrane. It is found in the cell membrane. It is involved in synaptogenesis and promotes synapse differentiation. Suppresses neurite outgrowth. The chain is SLIT and NTRK-like protein 4 (Slitrk4) from Mus musculus (Mouse).